A 103-amino-acid chain; its full sequence is c-Myc-binding protein (103 aa).

Belongs to the AMY1 family. In terms of assembly, binds via its C-terminal region to the N-terminal region of MYC. Associates with AKAP1/S-AKAP84. Interacts with MYCBPAP. Interacts with CFAP91.

The protein resides in the cytoplasm. The protein localises to the nucleus. In terms of biological role, may control the transcriptional activity of MYC. Stimulates the activation of E box-dependent transcription by MYC. The protein is c-Myc-binding protein (MYCBP) of Pongo abelii (Sumatran orangutan).